The primary structure comprises 381 residues: GDP-mannose transporter (381 aa).

The Cytoplasmic portion of the chain corresponds to 1–44 (MAEGKKTDDYTIQMDSIDQGNKSFEAPPPPQPRSPPSGSLSNNP). Positions 19–41 (QGNKSFEAPPPPQPRSPPSGSLS) are disordered. The segment covering 26-35 (APPPPQPRSP) has biased composition (pro residues). Residues 45–65 (ILPVLAYCGSSILMTVMNKYV) traverse the membrane as a helical segment. Topologically, residues 66 to 70 (LSGTD) are lumenal. A helical transmembrane segment spans residues 71 to 91 (FNLNFFLLCIQSLVCIIAIQT). Over 92–109 (CKSCGLITYRDFSADEAR) the chain is Cytoplasmic. Residues 110 to 126 (KWFPITLLLIGMIYTGS) traverse the membrane as a helical segment. The Lumenal portion of the chain corresponds to 127 to 133 (KALQFLS). A helical transmembrane segment spans residues 134 to 150 (IPVYTIFKNLTIILIAY). Over 151–159 (GEVLWFGGS) the chain is Cytoplasmic. Residues 160–181 (VTGLTLFSFGLMVLSSIIAAWA) form a helical membrane-spanning segment. At 182–199 (DIKHAVESNGDATAKVST) the chain is on the lumenal side. Residues 200 to 220 (LNAGYIWMLVNCLCTSSYVLG) traverse the membrane as a helical segment. Residues 221 to 234 (MRKRIKLTNFKDFD) lie on the Cytoplasmic side of the membrane. Residues 235 to 255 (TMFYNNLLSIPVLIVLSAFLE) traverse the membrane as a helical segment. The Lumenal portion of the chain corresponds to 256–273 (DWSSTNVNRNFPPMDRNS). The helical transmembrane segment at 274 to 294 (IVFAMILSGLSSVFISYTSAW) threads the bilayer. Residues 295–302 (CVRVTSST) lie on the Cytoplasmic side of the membrane. A helical membrane pass occupies residues 303–323 (TYSMVGALNKLPIAISGLIFF). Residues 324 to 326 (DAP) lie on the Lumenal side of the membrane. The chain crosses the membrane as a helical span at residues 327 to 347 (VTFPSVSAIVVGFVSGIVYAV). At 348–381 (AKIKQNAKPRTGVLPTANPPVSASSQSMRDSLRS) the chain is on the cytoplasmic side. Residues 358–381 (TGVLPTANPPVSASSQSMRDSLRS) form a disordered region. The span at 366 to 381 (PPVSASSQSMRDSLRS) shows a compositional bias: polar residues.

Belongs to the TPT transporter family. SLC35D subfamily. As to quaternary structure, homooligomer.

The protein localises to the golgi apparatus membrane. Its subcellular location is the cytoplasmic vesicle membrane. It localises to the endoplasmic reticulum membrane. In terms of biological role, involved in the import of GDP-mannose from the cytoplasm into the Golgi lumen. This chain is GDP-mannose transporter (gmt1), found in Aspergillus niger (strain ATCC MYA-4892 / CBS 513.88 / FGSC A1513).